The sequence spans 164 residues: MSWIAGAMQGAGLLGDLAGTIGQIVLHNKQLNIMNSFNQAQIQLAKDQLKQNQQLANQYYEFNANLPVNQYNSAVSAGFDSVSARQLAGSREVRYLGGQQTPLVHQGQIHQMMFSPKHLMQAQHVVGTFSRGMPGVTPSKGLPRPQGVTAKVPVAGATTTHSKV.

It belongs to the sapovirus VP2 family. Homooligomer. The portal-like structure consists in 12 copies of VP2. Interacts with capsid protein VP1.

It is found in the virion. It localises to the host cytoplasm. Its function is as follows. Minor structural protein that forms a portal-like structure at a unique three-fold axis of symmetry, following binding to the host receptor. The channel formed by VP2 may allow the delivery of the viral genome through the host endosomal membrane. This is Minor capsid protein VP2 from Porcine enteric sapovirus (isolate Swine/United States/Cowden/1980) (Sw/SV/Cowden/1980/US).